Here is a 173-residue protein sequence, read N- to C-terminus: 3-hydroxydecanoyl-[acyl-carrier-protein] dehydratase (173 aa).

H71 is an active-site residue.

This sequence belongs to the thioester dehydratase family. FabA subfamily. As to quaternary structure, homodimer.

It is found in the cytoplasm. It catalyses the reaction a (3R)-hydroxyacyl-[ACP] = a (2E)-enoyl-[ACP] + H2O. The catalysed reaction is (3R)-hydroxydecanoyl-[ACP] = (2E)-decenoyl-[ACP] + H2O. It carries out the reaction (2E)-decenoyl-[ACP] = (3Z)-decenoyl-[ACP]. It functions in the pathway lipid metabolism; fatty acid biosynthesis. Functionally, necessary for the introduction of cis unsaturation into fatty acids. Catalyzes the dehydration of (3R)-3-hydroxydecanoyl-ACP to E-(2)-decenoyl-ACP and then its isomerization to Z-(3)-decenoyl-ACP. Can catalyze the dehydratase reaction for beta-hydroxyacyl-ACPs with saturated chain lengths up to 16:0, being most active on intermediate chain length. This is 3-hydroxydecanoyl-[acyl-carrier-protein] dehydratase from Bradyrhizobium sp. (strain BTAi1 / ATCC BAA-1182).